Here is a 728-residue protein sequence, read N- to C-terminus: Protein Hook homolog 1 (728 aa).

The residue at position 1 (Met1) is an N-acetylmethionine. The sufficient for interaction with microtubules stretch occupies residues 1–555; sequence MEETQPPPQP…LKQKLEAHME (555 aa). The Calponin-homology (CH) domain maps to 12–128; the sequence is LPLCDSLMIW…RLLQLILGCA (117 aa). Coiled-coil stretches lie at residues 169-434 and 477-658; these read PNDA…RCSQ and LRLQ…AKFR. Residues 169–444 are sufficient for homodimerization, interaction wit HOOK2, HOOK3 and AP4M1; that stretch reads PNDAVGELEQ…VQQDHLNQTD (276 aa). A Phosphoserine modification is found at Ser235. Residues 481 to 512 are disordered; that stretch reads QEGSENERIEELQEQLEQKHRKMNELETEQRL. The segment covering 503 to 512 has biased composition (basic and acidic residues); the sequence is MNELETEQRL. The interval 657–728 is sufficient for interaction with AKTIP and VPS18; the sequence is FRDYEEKLIV…SVKVPATTSD (72 aa). Thr699 carries the post-translational modification Phosphothreonine. Phosphoserine occurs at positions 719 and 727.

It belongs to the hook family. As to quaternary structure, self-associates. Component of the FTS/Hook/FHIP complex (FHF complex), composed of AKTIP/FTS, FHIP1B, and one or more members of the Hook family of proteins HOOK1, HOOK2, and HOOK3. Interacts directly with AKTIP/FTS, HOOK2 and HOOK3. Associates with several subunits of the homotypic vesicular sorting complex (the HOPS complex) including VPS16, VPS18, VPS39 and VPS41; these interactions may be indirect. Interacts with CCDC181. Interacts (via coiled-coil region) with RIMBP3 (via C-terminus). Interacts with LRGUK (via guanylate kinase-like domain). Interacts with microtubules. May interact with CLN3. Interacts with AP4M1; the interaction is direct, mediates the interaction between FTS-Hook-FHIP (FHF) complex and AP-4 and the perinuclear distribution of AP-4.

The protein localises to the cytoplasm. Its subcellular location is the cytoskeleton. Component of the FTS/Hook/FHIP complex (FHF complex). The FHF complex may function to promote vesicle trafficking and/or fusion via the homotypic vesicular protein sorting complex (the HOPS complex). FHF complex promotes the distribution of AP-4 complex to the perinuclear area of the cell. Required for spermatid differentiation. Probably involved in the positioning of the microtubules of the manchette and the flagellum in relation to the membrane skeleton. The polypeptide is Protein Hook homolog 1 (Homo sapiens (Human)).